The sequence spans 329 residues: Transcription factor RF2b (329 aa).

Disordered stretches follow at residues 1 to 24 (MQEPKHTDPAAMRGAHHRRARSEV) and 62 to 97 (SSGPAAAGGSDRDRAAETSSPPRPKHRHSSSVDGSG). The bZIP domain occupies 132–195 (DPKRAKRILA…TGLSAENAEL (64 aa)). Residues 134-155 (KRAKRILANRQSAARSKERKAR) are basic motif. Positions 160–174 (LERKVQTLQTEATTL) are leucine-zipper. Residues 260–303 (RQNGGTQLPPQFQPPRPNVPNHMLSHPNGLQDIMQQDPLGRLQG) are disordered.

It belongs to the bZIP family. As to quaternary structure, binds DNA as a homodimer or as a heterodimer with RF2a. The heterodimer binds stronger to DNA than the homodimer. In terms of tissue distribution, expressed at high levels in roots, low level in leaf sheath, but not in leaf blade. Predominantly expressed in vascular tissues.

Its subcellular location is the nucleus. In terms of biological role, transcription factor probably involved in vascular development and shoot tissue organization. Binds to the DNA sequence 5'-CCGAGTGTGCCCCTGG-3' present in the promoter region Box II of the phloem-specific rice tungro bacilliform virus (RTBV) promoter. May regulate tissue-specific expression of the RTBV promoter and virus replication. This Oryza sativa subsp. japonica (Rice) protein is Transcription factor RF2b (RF2b).